The following is a 182-amino-acid chain: Peptidyl-prolyl cis-trans isomerase H (182 aa).

In terms of domain architecture, PPIase cyclophilin-type spans 15–181 (FFDITLGGEP…LDVVIAQCGE (167 aa)).

It belongs to the cyclophilin-type PPIase family. PPIase H subfamily.

The protein resides in the nucleus. It carries out the reaction [protein]-peptidylproline (omega=180) = [protein]-peptidylproline (omega=0). Its function is as follows. PPIases accelerate the folding of proteins. It catalyzes the cis-trans isomerization of proline imidic peptide bonds in oligopeptides. The chain is Peptidyl-prolyl cis-trans isomerase H (cyp-3) from Neurospora crassa (strain ATCC 24698 / 74-OR23-1A / CBS 708.71 / DSM 1257 / FGSC 987).